The following is a 136-amino-acid chain: Small ribosomal subunit protein uS8c (136 aa).

This sequence belongs to the universal ribosomal protein uS8 family. In terms of assembly, part of the 30S ribosomal subunit.

Its subcellular location is the plastid. It is found in the chloroplast. In terms of biological role, one of the primary rRNA binding proteins, it binds directly to 16S rRNA central domain where it helps coordinate assembly of the platform of the 30S subunit. The protein is Small ribosomal subunit protein uS8c (rps8) of Saccharum officinarum (Sugarcane).